Here is a 943-residue protein sequence, read N- to C-terminus: Synaptotagmin-like protein 2 (943 aa).

One can recognise a RabBD domain in the interval 1–57 (MIDLSFLTEEEQEAIMKVLQRDAALKRAEEERVRHLPEKVKDDQQLKNMSGQWFYEA). Disordered regions lie at residues 77–99 (RKKR…KESW), 118–291 (EEPE…VRFH), and 361–613 (ESDR…SNSG). Residues 82 to 99 (QVADEQSKDRANRAKESW) show a composition bias toward basic and acidic residues. Over residues 125–138 (APASPSSSVVNPVS) the composition is skewed to low complexity. Positions 174-192 (SQQTKNEQSKNGKTGLFQT) are enriched in polar residues. Positions 194 to 205 (KEGELSESKEES) are enriched in basic and acidic residues. Composition is skewed to polar residues over residues 382-394 (PQPS…LPFQ), 404-416 (KNET…SGSF), and 426-440 (EFLT…NSHT). Basic and acidic residues predominate over residues 524-537 (ELVRSAEDDQKADQ). Over residues 549–560 (STVSSQPDNQFS) the composition is skewed to polar residues. Residues 603 to 613 (SSLTNLSSNSG) show a composition bias toward low complexity. 2 C2 domains span residues 637–762 (VKGS…LKWY) and 777–906 (NRGE…VDWM).

As to quaternary structure, monomer. Binds NRXN1. Binds RAB27A that has been activated by GTP-binding via its N-terminus. Interacts with RAB27B.

It is found in the cell membrane. In terms of biological role, may act as a RAB27A effector protein and play a role in cytotoxic granule exocytosis in lymphocytes. The protein is Synaptotagmin-like protein 2 (SYTL2) of Bos taurus (Bovine).